Here is a 302-residue protein sequence, read N- to C-terminus: Succinate--CoA ligase [ADP-forming] subunit alpha (302 aa).

Residues 17 to 20 (TGST), K43, and 96 to 98 (ITE) contribute to the CoA site. Residue Y159 coordinates substrate. H247 (tele-phosphohistidine intermediate) is an active-site residue.

Belongs to the succinate/malate CoA ligase alpha subunit family. As to quaternary structure, heterotetramer of two alpha and two beta subunits.

It carries out the reaction succinate + ATP + CoA = succinyl-CoA + ADP + phosphate. The catalysed reaction is GTP + succinate + CoA = succinyl-CoA + GDP + phosphate. Its pathway is carbohydrate metabolism; tricarboxylic acid cycle; succinate from succinyl-CoA (ligase route): step 1/1. Succinyl-CoA synthetase functions in the citric acid cycle (TCA), coupling the hydrolysis of succinyl-CoA to the synthesis of either ATP or GTP and thus represents the only step of substrate-level phosphorylation in the TCA. The alpha subunit of the enzyme binds the substrates coenzyme A and phosphate, while succinate binding and nucleotide specificity is provided by the beta subunit. In Staphylococcus aureus (strain COL), this protein is Succinate--CoA ligase [ADP-forming] subunit alpha.